A 164-amino-acid chain; its full sequence is Seripauperin-21 (164 aa).

It belongs to the SRP1/TIP1 family. Seripauperin subfamily.

In Saccharomyces cerevisiae (strain ATCC 204508 / S288c) (Baker's yeast), this protein is Seripauperin-21 (PAU21).